A 336-amino-acid polypeptide reads, in one-letter code: Phenylalanine--tRNA ligase alpha subunit (336 aa).

Residue glutamate 259 coordinates Mg(2+).

The protein belongs to the class-II aminoacyl-tRNA synthetase family. Phe-tRNA synthetase alpha subunit type 1 subfamily. In terms of assembly, tetramer of two alpha and two beta subunits. The cofactor is Mg(2+).

It localises to the cytoplasm. It carries out the reaction tRNA(Phe) + L-phenylalanine + ATP = L-phenylalanyl-tRNA(Phe) + AMP + diphosphate + H(+). The sequence is that of Phenylalanine--tRNA ligase alpha subunit from Tropheryma whipplei (strain TW08/27) (Whipple's bacillus).